Here is a 380-residue protein sequence, read N- to C-terminus: 1-deoxy-D-xylulose 5-phosphate reductoisomerase (380 aa).

8 residues coordinate NADPH: Thr10, Gly11, Ser12, Ile13, Gly36, Arg37, Asn38, and Asn120. Position 121 (Lys121) interacts with 1-deoxy-D-xylulose 5-phosphate. Glu122 is an NADPH binding site. Asp146 provides a ligand contact to Mn(2+). 1-deoxy-D-xylulose 5-phosphate-binding residues include Ser147, Glu148, Ser172, and His195. Glu148 serves as a coordination point for Mn(2+). Position 201 (Gly201) interacts with NADPH. Ser208, Asn213, Lys214, and Glu217 together coordinate 1-deoxy-D-xylulose 5-phosphate. Glu217 contacts Mn(2+).

It belongs to the DXR family. The cofactor is Mg(2+). Mn(2+) serves as cofactor.

The enzyme catalyses 2-C-methyl-D-erythritol 4-phosphate + NADP(+) = 1-deoxy-D-xylulose 5-phosphate + NADPH + H(+). It participates in isoprenoid biosynthesis; isopentenyl diphosphate biosynthesis via DXP pathway; isopentenyl diphosphate from 1-deoxy-D-xylulose 5-phosphate: step 1/6. Its function is as follows. Catalyzes the NADPH-dependent rearrangement and reduction of 1-deoxy-D-xylulose-5-phosphate (DXP) to 2-C-methyl-D-erythritol 4-phosphate (MEP). This Listeria welshimeri serovar 6b (strain ATCC 35897 / DSM 20650 / CCUG 15529 / CIP 8149 / NCTC 11857 / SLCC 5334 / V8) protein is 1-deoxy-D-xylulose 5-phosphate reductoisomerase.